A 157-amino-acid chain; its full sequence is Transcriptional repressor NrdR (157 aa).

Residues 3–34 fold into a zinc finger; the sequence is CPFCRHPDSRVIDSRTSDDGLSIRRRRQCPEC. Residues 46 to 136 enclose the ATP-cone domain; sequence LSVIKRSGVV…VYQAFDSLED (91 aa).

It belongs to the NrdR family. Zn(2+) is required as a cofactor.

Functionally, negatively regulates transcription of bacterial ribonucleotide reductase nrd genes and operons by binding to NrdR-boxes. The polypeptide is Transcriptional repressor NrdR (Leifsonia xyli subsp. xyli (strain CTCB07)).